We begin with the raw amino-acid sequence, 205 residues long: GTP cyclohydrolase-2 (205 aa).

49 to 53 (RIHSE) contacts GTP. Zn(2+)-binding residues include Cys54, Cys65, and Cys67. GTP contacts are provided by residues Gln70, 92 to 94 (EGR), and Thr114. Asp126 acts as the Proton acceptor in catalysis. Arg128 acts as the Nucleophile in catalysis. The GTP site is built by Thr149 and Lys154.

This sequence belongs to the GTP cyclohydrolase II family. The cofactor is Zn(2+).

It catalyses the reaction GTP + 4 H2O = 2,5-diamino-6-hydroxy-4-(5-phosphoribosylamino)-pyrimidine + formate + 2 phosphate + 3 H(+). It functions in the pathway cofactor biosynthesis; riboflavin biosynthesis; 5-amino-6-(D-ribitylamino)uracil from GTP: step 1/4. Its function is as follows. Catalyzes the conversion of GTP to 2,5-diamino-6-ribosylamino-4(3H)-pyrimidinone 5'-phosphate (DARP), formate and pyrophosphate. In Shewanella woodyi (strain ATCC 51908 / MS32), this protein is GTP cyclohydrolase-2.